The chain runs to 432 residues: Enolase (432 aa).

Gln167 serves as a coordination point for (2R)-2-phosphoglycerate. Residue Glu209 is the Proton donor of the active site. Residues Asp246, Glu289, and Asp316 each coordinate Mg(2+). Residues Lys341, Arg370, Ser371, and Lys392 each contribute to the (2R)-2-phosphoglycerate site. Catalysis depends on Lys341, which acts as the Proton acceptor.

The protein belongs to the enolase family. Mg(2+) is required as a cofactor.

It localises to the cytoplasm. The protein resides in the secreted. It is found in the cell surface. It catalyses the reaction (2R)-2-phosphoglycerate = phosphoenolpyruvate + H2O. It functions in the pathway carbohydrate degradation; glycolysis; pyruvate from D-glyceraldehyde 3-phosphate: step 4/5. Catalyzes the reversible conversion of 2-phosphoglycerate (2-PG) into phosphoenolpyruvate (PEP). It is essential for the degradation of carbohydrates via glycolysis. This Petrotoga mobilis (strain DSM 10674 / SJ95) protein is Enolase.